The primary structure comprises 156 residues: Ribosomal RNA large subunit methyltransferase H (156 aa).

S-adenosyl-L-methionine is bound by residues L73, G104, and 123–128 (LSSLTL).

Belongs to the RNA methyltransferase RlmH family. Homodimer.

The protein localises to the cytoplasm. The catalysed reaction is pseudouridine(1915) in 23S rRNA + S-adenosyl-L-methionine = N(3)-methylpseudouridine(1915) in 23S rRNA + S-adenosyl-L-homocysteine + H(+). Specifically methylates the pseudouridine at position 1915 (m3Psi1915) in 23S rRNA. The protein is Ribosomal RNA large subunit methyltransferase H of Neisseria gonorrhoeae (strain NCCP11945).